Reading from the N-terminus, the 450-residue chain is Crh-like protein 4 (450 aa).

Positions 1–21 (MRLSLVGVAIGLLSSSAIVTA) are cleaved as a signal peptide. Cys-27 and Cys-34 are disulfide-bonded. The 183-residue stretch at 46 to 228 (YDFTKGSSPD…WAGGETDYSA (183 aa)) folds into the GH16 domain. The active-site Nucleophile is Glu-119. The Proton donor role is filled by Glu-123. Glu-123, Lys-201, Trp-205, and Thr-216 together coordinate chitin. The N-linked (GlcNAc...) asparagine glycan is linked to Asn-383.

This sequence belongs to the glycosyl hydrolase 16 family. CRH1 subfamily. In terms of processing, the GPI-like anchor contains a phosphoceramide lipid group. The anchor position has not been determined.

It is found in the cell membrane. The protein resides in the secreted. Its subcellular location is the cell wall. It carries out the reaction Random endo-hydrolysis of N-acetyl-beta-D-glucosaminide (1-&gt;4)-beta-linkages in chitin and chitodextrins.. In terms of biological role, dual chitinase/transglycosylase that plays a role in cell wall architecture. Chitinase and transglycosylase activities are coupled. Required for the polysaccharide cross-linking at the septa and the cell wall. More specifically, transfers chitin to 1,6-beta-glucan in the cell wall. This is Crh-like protein 4 from Aspergillus fumigatus (strain ATCC MYA-4609 / CBS 101355 / FGSC A1100 / Af293) (Neosartorya fumigata).